The chain runs to 122 residues: MAFDKLANVATVDAIFAISSSTFLWSTWVLQRTILKRPNFFSPNPVVEKMVHPTLITWKLFSFTSVLTVSTFTFASCLIMRTIGVENIKEFGLYAREKLSFARAKPVKDDITSFPNHKISIT.

The next 2 helical transmembrane spans lie at 9-29 and 60-80; these read VATV…STWV and LFSF…CLIM.

It is found in the cytoplasm. It localises to the membrane. This is an uncharacterized protein from Schizosaccharomyces pombe (strain 972 / ATCC 24843) (Fission yeast).